The chain runs to 101 residues: NAD(P)H-quinone oxidoreductase subunit 4L (101 aa).

Transmembrane regions (helical) follow at residues 3–23, 30–50, and 64–84; these read LQYFLLIAAALFCIGVYGLVT, VLMSIELMLNAVNLNLMAFSN, and IFVITIAAAEAAVGLAIVLAI.

The protein belongs to the complex I subunit 4L family. NDH-1 can be composed of about 15 different subunits; different subcomplexes with different compositions have been identified which probably have different functions.

It is found in the cellular thylakoid membrane. It catalyses the reaction a plastoquinone + NADH + (n+1) H(+)(in) = a plastoquinol + NAD(+) + n H(+)(out). The enzyme catalyses a plastoquinone + NADPH + (n+1) H(+)(in) = a plastoquinol + NADP(+) + n H(+)(out). In terms of biological role, NDH-1 shuttles electrons from an unknown electron donor, via FMN and iron-sulfur (Fe-S) centers, to quinones in the respiratory and/or the photosynthetic chain. The immediate electron acceptor for the enzyme in this species is believed to be plastoquinone. Couples the redox reaction to proton translocation, and thus conserves the redox energy in a proton gradient. Cyanobacterial NDH-1 also plays a role in inorganic carbon-concentration. The protein is NAD(P)H-quinone oxidoreductase subunit 4L of Leptolyngbya boryana (Plectonema boryanum).